The following is a 95-amino-acid chain: Small ribosomal subunit protein bS6 (95 aa).

The protein belongs to the bacterial ribosomal protein bS6 family.

In terms of biological role, binds together with bS18 to 16S ribosomal RNA. This Desulfitobacterium hafniense (strain DSM 10664 / DCB-2) protein is Small ribosomal subunit protein bS6.